Here is a 386-residue protein sequence, read N- to C-terminus: Lycopene beta-cyclase (386 aa).

3 to 33 (DLILVGGGLANGLIAWRLRQRYPQLNLLLIE) is an NAD(+) binding site.

Belongs to the lycopene cyclase family. It depends on FAD as a cofactor.

The catalysed reaction is a carotenoid psi-end group = a carotenoid beta-end derivative. The enzyme catalyses all-trans-lycopene = gamma-carotene. It catalyses the reaction gamma-carotene = all-trans-beta-carotene. It participates in carotenoid biosynthesis; beta-carotene biosynthesis. Its function is as follows. Catalyzes the double cyclization reaction which converts lycopene to beta-carotene. In Pseudescherichia vulneris (Escherichia vulneris), this protein is Lycopene beta-cyclase.